Here is a 213-residue protein sequence, read N- to C-terminus: ATP phosphoribosyltransferase (213 aa).

Belongs to the ATP phosphoribosyltransferase family. Short subfamily. As to quaternary structure, heteromultimer composed of HisG and HisZ subunits.

It is found in the cytoplasm. The catalysed reaction is 1-(5-phospho-beta-D-ribosyl)-ATP + diphosphate = 5-phospho-alpha-D-ribose 1-diphosphate + ATP. Its pathway is amino-acid biosynthesis; L-histidine biosynthesis; L-histidine from 5-phospho-alpha-D-ribose 1-diphosphate: step 1/9. Functionally, catalyzes the condensation of ATP and 5-phosphoribose 1-diphosphate to form N'-(5'-phosphoribosyl)-ATP (PR-ATP). Has a crucial role in the pathway because the rate of histidine biosynthesis seems to be controlled primarily by regulation of HisG enzymatic activity. The sequence is that of ATP phosphoribosyltransferase from Methylococcus capsulatus (strain ATCC 33009 / NCIMB 11132 / Bath).